Reading from the N-terminus, the 444-residue chain is Trimethylamine monooxygenase (444 aa).

Residues C12, E37, Q39, L45, and W46 each coordinate FAD. W70 and N72 together coordinate NADP(+). N72 and V125 together coordinate FAD. NADP(+) is bound by residues Y170, S202, S203, S205, R226, H227, and N288. 2 residues coordinate FAD: Q315 and T318. R409 provides a ligand contact to NADP(+).

The protein belongs to the FMO family. Homodimer. The cofactor is FAD.

It carries out the reaction trimethylamine + NADPH + O2 = trimethylamine N-oxide + NADP(+) + H2O. In terms of biological role, catalyzes the oxidation of trimethylamine (TMA) to produce trimethylamine N-oxide (TMAO). In vitro, has a broad substrate specificity, oxidizing many nitrogen- and sulfur-containing compounds, including dimethylamine (DMA), dimethylsulfide (DMS), dimethylsulfoxide (DMSO) and methimazole. TMA shows the highest affinity. In Pelagibacter sp. (strain HTCC7211), this protein is Trimethylamine monooxygenase.